A 606-amino-acid chain; its full sequence is DNA ligase (606 aa).

Position 263 (glutamate 263) interacts with ATP. Lysine 265 (N6-AMP-lysine intermediate) is an active-site residue. ATP-binding residues include arginine 270, arginine 285, glutamate 315, phenylalanine 355, arginine 432, and lysine 438.

Belongs to the ATP-dependent DNA ligase family. It depends on Mg(2+) as a cofactor. Requires Mn(2+) as cofactor.

It catalyses the reaction ATP + (deoxyribonucleotide)n-3'-hydroxyl + 5'-phospho-(deoxyribonucleotide)m = (deoxyribonucleotide)n+m + AMP + diphosphate.. The catalysed reaction is ADP + (deoxyribonucleotide)n-3'-hydroxyl + 5'-phospho-(deoxyribonucleotide)m = (deoxyribonucleotide)n+m + AMP + phosphate.. The enzyme catalyses GTP + (deoxyribonucleotide)n-3'-hydroxyl + 5'-phospho-(deoxyribonucleotide)m = (deoxyribonucleotide)n+m + GMP + diphosphate.. Functionally, DNA ligase that seals nicks in double-stranded DNA during DNA replication, DNA recombination and DNA repair. Can use ATP, ADP and GTP, but not CTP, TTP or NAD(+). The polypeptide is DNA ligase (Sulfophobococcus zilligii).